The following is a 130-amino-acid chain: UPF0102 protein RPA0323 (130 aa).

It belongs to the UPF0102 family.

The protein is UPF0102 protein RPA0323 of Rhodopseudomonas palustris (strain ATCC BAA-98 / CGA009).